A 397-amino-acid chain; its full sequence is Monooxygenase 1 (397 aa).

Belongs to the 3-hydroxybenzoate 6-hydroxylase family. In terms of assembly, monomer. FAD serves as cofactor. In terms of tissue distribution, expressed in seedlings, roots, leaves, flowers and siliques.

This chain is Monooxygenase 1, found in Arabidopsis thaliana (Mouse-ear cress).